Consider the following 220-residue polypeptide: MKTYKIAVDGPAASGKSSTSDLVARKLGFSHLISGNLYRAVTYGLVRRFGEVRPGDEEQKRFVLELSIEVRNNRVFLDGEDVSESLRKEVVDRHVVSVAREKYIREKVFTIQRSVIDLEKRGIVVDGRDIATRIMPNADLKVFLTASPETRARRRYMEGGSESYEELLESIKKRDHNDRTREHDPLVATCDSIVIENDSMTLEETADEIIRLFRRVESFN.

10–18 (GPAASGKSS) lines the ATP pocket.

It belongs to the cytidylate kinase family. Type 1 subfamily.

It carries out the reaction CMP + ATP = CDP + ADP. The enzyme catalyses dCMP + ATP = dCDP + ADP. The protein is Probable cytidylate kinase of Encephalitozoon cuniculi (strain GB-M1) (Microsporidian parasite).